We begin with the raw amino-acid sequence, 625 residues long: Folylpolyglutamate synthase (625 aa).

141–144 (GKGS) contacts ATP. Mg(2+) contacts are provided by Ser-165, Glu-234, and His-262. ATP-binding residues include Arg-384 and Asp-414.

It belongs to the folylpolyglutamate synthase family. It depends on a monovalent cation as a cofactor.

The protein resides in the mitochondrion inner membrane. It localises to the mitochondrion matrix. It carries out the reaction (6S)-5,6,7,8-tetrahydrofolyl-(gamma-L-Glu)(n) + L-glutamate + ATP = (6S)-5,6,7,8-tetrahydrofolyl-(gamma-L-Glu)(n+1) + ADP + phosphate + H(+). It functions in the pathway cofactor biosynthesis; tetrahydrofolylpolyglutamate biosynthesis. Its function is as follows. Catalyzes conversion of folates to polyglutamate derivatives allowing concentration of folate compounds in the cell and the intracellular retention of these cofactors, which are important substrates for most of the folate-dependent enzymes that are involved in one-carbon transfer reactions involved in purine, pyrimidine and amino acid synthesis. Essential for organellar and whole-plant folate homeostasis. The protein is Folylpolyglutamate synthase of Arabidopsis thaliana (Mouse-ear cress).